A 310-amino-acid chain; its full sequence is Homoserine kinase (310 aa).

Position 91 to 101 (91 to 101) interacts with ATP; that stretch reads PIGSGLGSSAC.

Belongs to the GHMP kinase family. Homoserine kinase subfamily.

The protein resides in the cytoplasm. It catalyses the reaction L-homoserine + ATP = O-phospho-L-homoserine + ADP + H(+). The protein operates within amino-acid biosynthesis; L-threonine biosynthesis; L-threonine from L-aspartate: step 4/5. Catalyzes the ATP-dependent phosphorylation of L-homoserine to L-homoserine phosphate. The chain is Homoserine kinase from Shigella sonnei (strain Ss046).